The primary structure comprises 447 residues: Argininosuccinate synthase (447 aa).

Residues 17 to 25 and Ala-43 each bind ATP; that span reads AFSGGLDTS. Residue Tyr-99 participates in L-citrulline binding. Residues Gly-129 and Thr-131 each contribute to the ATP site. 3 residues coordinate L-aspartate: Thr-131, Asn-135, and Asp-136. Asn-135 serves as a coordination point for L-citrulline. Residue Asp-136 coordinates ATP. Arg-139 and Ser-192 together coordinate L-citrulline. Residue Asp-194 participates in ATP binding. L-citrulline contacts are provided by Thr-201, Glu-203, and Glu-280.

This sequence belongs to the argininosuccinate synthase family. Type 2 subfamily. In terms of assembly, homotetramer.

It is found in the cytoplasm. It carries out the reaction L-citrulline + L-aspartate + ATP = 2-(N(omega)-L-arginino)succinate + AMP + diphosphate + H(+). Its pathway is amino-acid biosynthesis; L-arginine biosynthesis; L-arginine from L-ornithine and carbamoyl phosphate: step 2/3. This chain is Argininosuccinate synthase, found in Citrobacter koseri (strain ATCC BAA-895 / CDC 4225-83 / SGSC4696).